Consider the following 2767-residue polypeptide: Serine/threonine-protein kinase ATM (2767 aa).

Residues N1713–A2317 form the FAT domain. In terms of domain architecture, PI3K/PI4K catalytic spans W2419–M2734. The G-loop stretch occupies residues Q2425–A2431. The interval G2601–N2609 is catalytic loop. An activation loop region spans residues H2621–T2645. Residues G2735–L2767 enclose the FATC domain.

Belongs to the PI3/PI4-kinase family. ATM subfamily.

The protein localises to the nucleus. It localises to the chromosome. It is found in the telomere. The enzyme catalyses L-seryl-[protein] + ATP = O-phospho-L-seryl-[protein] + ADP + H(+). It carries out the reaction L-threonyl-[protein] + ATP = O-phospho-L-threonyl-[protein] + ADP + H(+). Serine/threonine-protein kinase which recognizes the substrate consensus sequence [ST]-Q. Required to suppress spontaneous apoptosis of proliferating cells during development, and for their proper differentiation. Required for female fertility. Protects telomeres from fusion, maybe by recruiting or maintaining chromatin-modifying complexes such as Su(var)205/HP1. May activate checkpoint signaling in response to DNA double-stranded breaks induced by low-dose ionizing radiation. May phosphorylate histone H2AV. The sequence is that of Serine/threonine-protein kinase ATM (tefu) from Drosophila melanogaster (Fruit fly).